A 62-amino-acid chain; its full sequence is Large ribosomal subunit protein uL30 (62 aa).

Belongs to the universal ribosomal protein uL30 family. In terms of assembly, part of the 50S ribosomal subunit.

In Polynucleobacter asymbioticus (strain DSM 18221 / CIP 109841 / QLW-P1DMWA-1) (Polynucleobacter necessarius subsp. asymbioticus), this protein is Large ribosomal subunit protein uL30.